The following is a 1040-amino-acid chain: Multidrug resistance protein MdtB (1040 aa).

Helical transmembrane passes span 25–45, 347–367, 369–389, 396–416, 440–460, 472–492, 537–557, 863–883, 888–908, 910–930, 968–988, and 998–1018; these read LLMA…PVAA, LMLA…NIPA, IIPG…MVFL, LTLM…IVVI, IGFT…PLLF, FAVT…TLTP, WLTL…WIVI, LGST…VLGV, FIHP…ALLA, IIAG…LIGI, ILMT…STGV, and IAMV…TPVI.

This sequence belongs to the resistance-nodulation-cell division (RND) (TC 2.A.6) family. MdtB subfamily. In terms of assembly, part of a tripartite efflux system composed of MdtA, MdtB and MdtC. MdtB forms a heteromultimer with MdtC.

It localises to the cell inner membrane. This chain is Multidrug resistance protein MdtB, found in Salmonella agona (strain SL483).